Here is a 224-residue protein sequence, read N- to C-terminus: Artemin (224 aa).

The signal sequence occupies residues 1-39; that stretch reads MELGLGEPTALSHCLRPRWQPALWPTLAALALLSSVTEA. A propeptide spanning residues 40-111 is cleaved from the precursor; it reads SLDPMSRSPA…AALRGARAAR (72 aa). Residues 41 to 124 are disordered; sequence LDPMSRSPAS…RSSRARATDA (84 aa). Over residues 80–95 the composition is skewed to pro residues; the sequence is RPPPQSPQPAPPPPGP. Low complexity predominate over residues 96-116; that stretch reads ALQSPPAALRGARAARAGTRS. Intrachain disulfides connect Cys-127-Cys-192, Cys-154-Cys-220, and Cys-158-Cys-222. N-linked (GlcNAc...) asparagine glycosylation is present at Asn-206.

This sequence belongs to the TGF-beta family. GDNF subfamily. In terms of assembly, homodimer; disulfide-linked. Interacts with GFRA3 coreceptor and RET: forms a 2:2:2 ternary complex composed of ARTN ligand, GFRA3 and RET receptor. As to expression, cochlea. Expressed at higher level in sesorineural epithelium than in the modiolus region or substantia nigra.

It is found in the secreted. In terms of biological role, growth factor that supports the survival of sensory and sympathetic peripheral neurons in culture and also supports the survival of dopaminergic neurons of the ventral mid-brain. Acts by binding to its coreceptor, GFRA3, leading to autophosphorylation and activation of the RET receptor. Strong attractant of gut hematopoietic cells thus promoting the formation Peyer's patch-like structures, a major component of the gut-associated lymphoid tissue. This is Artemin (Artn) from Rattus norvegicus (Rat).